The sequence spans 422 residues: GTPase Obg (422 aa).

Residues 1–158 (MFYDRAKIYV…LWLELELKVI (158 aa)) enclose the Obg domain. The OBG-type G domain occupies 159–330 (ADVGLIGFPN…VIHRVAELLA (172 aa)). Residues 165 to 172 (GFPNAGKS), 190 to 194 (FTTLV), 212 to 215 (DIPG), 282 to 285 (NKMD), and 311 to 313 (SAA) contribute to the GTP site. Mg(2+) contacts are provided by Ser172 and Thr192. The OCT domain maps to 344-422 (VMFEPEERFN…IGDWEFEWSE (79 aa)).

Belongs to the TRAFAC class OBG-HflX-like GTPase superfamily. OBG GTPase family. In terms of assembly, monomer. Mg(2+) serves as cofactor.

It localises to the cytoplasm. Its function is as follows. An essential GTPase which binds GTP, GDP and possibly (p)ppGpp with moderate affinity, with high nucleotide exchange rates and a fairly low GTP hydrolysis rate. Plays a role in control of the cell cycle, stress response, ribosome biogenesis and in those bacteria that undergo differentiation, in morphogenesis control. The sequence is that of GTPase Obg from Desulforamulus reducens (strain ATCC BAA-1160 / DSM 100696 / MI-1) (Desulfotomaculum reducens).